Reading from the N-terminus, the 23-residue chain is Profilin (23 aa).

The protein belongs to the profilin family. In terms of assembly, occurs in many kinds of cells as a complex with monomeric actin in a 1:1 ratio.

Its subcellular location is the cytoplasm. It is found in the cytoskeleton. In terms of biological role, binds to actin and affects the structure of the cytoskeleton. At high concentrations, profilin prevents the polymerization of actin, whereas it enhances it at low concentrations. By binding to PIP2, it inhibits the formation of IP3 and DG. This chain is Profilin, found in Beta vulgaris (Sugar beet).